The following is a 527-amino-acid chain: Putative GTP-binding protein 6 (527 aa).

The Hflx-type G domain occupies 306–470 (PIISILGYTN…QVETAVMKST (165 aa)). GTP contacts are provided by residues 312-319 (GYTNSGKT), 338-342 (FATLD), 360-363 (DTIG), 429-432 (NKID), and 448-450 (SAL). The Mg(2+) site is built by Thr-319 and Thr-340.

It belongs to the TRAFAC class OBG-HflX-like GTPase superfamily. HflX GTPase family. Mg(2+) serves as cofactor.

The chain is Putative GTP-binding protein 6 (gtpbp6) from Xenopus laevis (African clawed frog).